A 508-amino-acid chain; its full sequence is Photosystem II CP47 reaction center protein (508 aa).

The next 6 membrane-spanning stretches (helical) occupy residues 21–36 (AVHIMHTALVSGWAGS), 101–115 (IVFSGLCFLAAIWHW), 140–156 (GIHLFLAGVACFGFGAF), 203–218 (IAAGTLGILAGLFHLS), 237–252 (VLSSSIAAVFFAAFVV), and 457–472 (TFALLFFFGHIWHGAR).

Belongs to the PsbB/PsbC family. PsbB subfamily. In terms of assembly, PSII is composed of 1 copy each of membrane proteins PsbA, PsbB, PsbC, PsbD, PsbE, PsbF, PsbH, PsbI, PsbJ, PsbK, PsbL, PsbM, PsbT, PsbX, PsbY, PsbZ, Psb30/Ycf12, at least 3 peripheral proteins of the oxygen-evolving complex and a large number of cofactors. It forms dimeric complexes. Requires Binds multiple chlorophylls. PSII binds additional chlorophylls, carotenoids and specific lipids. as cofactor.

The protein resides in the plastid. It is found in the chloroplast thylakoid membrane. Functionally, one of the components of the core complex of photosystem II (PSII). It binds chlorophyll and helps catalyze the primary light-induced photochemical processes of PSII. PSII is a light-driven water:plastoquinone oxidoreductase, using light energy to abstract electrons from H(2)O, generating O(2) and a proton gradient subsequently used for ATP formation. This is Photosystem II CP47 reaction center protein from Hordeum vulgare (Barley).